A 151-amino-acid polypeptide reads, in one-letter code: Transcriptional repressor NrdR (151 aa).

The segment at 3–34 (CPFCGYSESKVVDSRSTEDNMAIRRRRECLEC) is a zinc-finger region. Residues 49–139 (ILVIKKDSSR…VYRQFKDINT (91 aa)) enclose the ATP-cone domain.

It belongs to the NrdR family. It depends on Zn(2+) as a cofactor.

Its function is as follows. Negatively regulates transcription of bacterial ribonucleotide reductase nrd genes and operons by binding to NrdR-boxes. This Clostridium acetobutylicum (strain ATCC 824 / DSM 792 / JCM 1419 / IAM 19013 / LMG 5710 / NBRC 13948 / NRRL B-527 / VKM B-1787 / 2291 / W) protein is Transcriptional repressor NrdR.